Here is a 372-residue protein sequence, read N- to C-terminus: Queuine tRNA-ribosyltransferase (372 aa).

Catalysis depends on aspartate 92, which acts as the Proton acceptor. Substrate-binding positions include 92–96 (DSGGY), aspartate 146, glutamine 188, and glycine 215. The RNA binding stretch occupies residues 246 to 252 (GIGSLKE). The active-site Nucleophile is the aspartate 265. The tract at residues 270–274 (TRLGR) is RNA binding; important for wobble base 34 recognition. Residues cysteine 303, cysteine 305, cysteine 308, and histidine 334 each contribute to the Zn(2+) site.

Belongs to the queuine tRNA-ribosyltransferase family. As to quaternary structure, homodimer. Within each dimer, one monomer is responsible for RNA recognition and catalysis, while the other monomer binds to the replacement base PreQ1. Requires Zn(2+) as cofactor.

It carries out the reaction 7-aminomethyl-7-carbaguanine + guanosine(34) in tRNA = 7-aminomethyl-7-carbaguanosine(34) in tRNA + guanine. The protein operates within tRNA modification; tRNA-queuosine biosynthesis. Functionally, catalyzes the base-exchange of a guanine (G) residue with the queuine precursor 7-aminomethyl-7-deazaguanine (PreQ1) at position 34 (anticodon wobble position) in tRNAs with GU(N) anticodons (tRNA-Asp, -Asn, -His and -Tyr). Catalysis occurs through a double-displacement mechanism. The nucleophile active site attacks the C1' of nucleotide 34 to detach the guanine base from the RNA, forming a covalent enzyme-RNA intermediate. The proton acceptor active site deprotonates the incoming PreQ1, allowing a nucleophilic attack on the C1' of the ribose to form the product. After dissociation, two additional enzymatic reactions on the tRNA convert PreQ1 to queuine (Q), resulting in the hypermodified nucleoside queuosine (7-(((4,5-cis-dihydroxy-2-cyclopenten-1-yl)amino)methyl)-7-deazaguanosine). This chain is Queuine tRNA-ribosyltransferase, found in Prochlorococcus marinus (strain MIT 9515).